A 493-amino-acid polypeptide reads, in one-letter code: Acetylcholine receptor subunit beta (493 aa).

A signal peptide spans 1 to 24 (MENVRRMALGLVVMMALALSGVGA). Over 25 to 240 (SVMEDTLLSV…VTFYLIIQRK (216 aa)) the chain is Extracellular. Cys-152 and Cys-166 are oxidised to a cystine. Asn-165 carries an N-linked (GlcNAc...) asparagine glycan. The next 3 helical transmembrane spans lie at 241–265 (PLFY…VFYL), 273–291 (MSLS…LLLA), and 307–328 (YLMF…VLNL). Topologically, residues 329–461 (HHRSPNTHTM…WQYVAMVADR (133 aa)) are cytoplasmic. Position 379 is a phosphotyrosine; by Tyr-kinases (Tyr-379). A helical membrane pass occupies residues 462–480 (LFLYVFFVICSIGTFSIFL).

Belongs to the ligand-gated ion channel (TC 1.A.9) family. Acetylcholine receptor (TC 1.A.9.1) subfamily. Beta-1/CHRNB1 sub-subfamily. Pentamer of two alpha chains, and one each of the beta, delta, and gamma chains.

The protein localises to the postsynaptic cell membrane. The protein resides in the cell membrane. The catalysed reaction is K(+)(in) = K(+)(out). The enzyme catalyses Na(+)(in) = Na(+)(out). In terms of biological role, after binding acetylcholine, the AChR responds by an extensive change in conformation that affects all subunits and leads to opening of an ion-conducting channel across the plasma membrane. The chain is Acetylcholine receptor subunit beta (CHRNB1) from Tetronarce californica (Pacific electric ray).